Consider the following 213-residue polypeptide: ATP-dependent Clp protease proteolytic subunit (213 aa).

The Nucleophile role is filled by Ser114. Residue His139 is part of the active site.

Belongs to the peptidase S14 family. As to quaternary structure, fourteen ClpP subunits assemble into 2 heptameric rings which stack back to back to give a disk-like structure with a central cavity, resembling the structure of eukaryotic proteasomes.

The protein localises to the cytoplasm. It carries out the reaction Hydrolysis of proteins to small peptides in the presence of ATP and magnesium. alpha-casein is the usual test substrate. In the absence of ATP, only oligopeptides shorter than five residues are hydrolyzed (such as succinyl-Leu-Tyr-|-NHMec, and Leu-Tyr-Leu-|-Tyr-Trp, in which cleavage of the -Tyr-|-Leu- and -Tyr-|-Trp bonds also occurs).. Cleaves peptides in various proteins in a process that requires ATP hydrolysis. Has a chymotrypsin-like activity. Plays a major role in the degradation of misfolded proteins. The polypeptide is ATP-dependent Clp protease proteolytic subunit (Pseudomonas syringae pv. syringae (strain B728a)).